Here is a 161-residue protein sequence, read N- to C-terminus: Endoribonuclease YbeY (161 aa).

Zn(2+) is bound by residues H127, H131, and H137.

Belongs to the endoribonuclease YbeY family. Zn(2+) serves as cofactor.

The protein localises to the cytoplasm. Its function is as follows. Single strand-specific metallo-endoribonuclease involved in late-stage 70S ribosome quality control and in maturation of the 3' terminus of the 16S rRNA. This Listeria innocua serovar 6a (strain ATCC BAA-680 / CLIP 11262) protein is Endoribonuclease YbeY.